Reading from the N-terminus, the 107-residue chain is Thiosulfate sulfurtransferase GlpE (107 aa).

The Rhodanese domain occupies 19-107 (QDLNAVLVDI…WHKAGLPVEK (89 aa)). The active-site Cysteine persulfide intermediate is C67.

It belongs to the GlpE family.

Its subcellular location is the cytoplasm. It catalyses the reaction thiosulfate + hydrogen cyanide = thiocyanate + sulfite + 2 H(+). It carries out the reaction thiosulfate + [thioredoxin]-dithiol = [thioredoxin]-disulfide + hydrogen sulfide + sulfite + 2 H(+). In terms of biological role, transferase that catalyzes the transfer of sulfur from thiosulfate to thiophilic acceptors such as cyanide or dithiols. May function in a CysM-independent thiosulfate assimilation pathway by catalyzing the conversion of thiosulfate to sulfite, which can then be used for L-cysteine biosynthesis. The sequence is that of Thiosulfate sulfurtransferase GlpE from Aliivibrio fischeri (strain MJ11) (Vibrio fischeri).